Reading from the N-terminus, the 429-residue chain is 4-hydroxy-3-methylbut-2-en-1-yl diphosphate synthase (flavodoxin) (429 aa).

[4Fe-4S] cluster-binding residues include Cys-310, Cys-313, Cys-356, and Glu-363.

This sequence belongs to the IspG family. It depends on [4Fe-4S] cluster as a cofactor.

It carries out the reaction (2E)-4-hydroxy-3-methylbut-2-enyl diphosphate + oxidized [flavodoxin] + H2O + 2 H(+) = 2-C-methyl-D-erythritol 2,4-cyclic diphosphate + reduced [flavodoxin]. It functions in the pathway isoprenoid biosynthesis; isopentenyl diphosphate biosynthesis via DXP pathway; isopentenyl diphosphate from 1-deoxy-D-xylulose 5-phosphate: step 5/6. Functionally, converts 2C-methyl-D-erythritol 2,4-cyclodiphosphate (ME-2,4cPP) into 1-hydroxy-2-methyl-2-(E)-butenyl 4-diphosphate. In Bradyrhizobium sp. (strain BTAi1 / ATCC BAA-1182), this protein is 4-hydroxy-3-methylbut-2-en-1-yl diphosphate synthase (flavodoxin).